The following is a 545-amino-acid chain: Serine/threonine-protein kinase PAK 1 (545 aa).

The interval 1–77 is disordered; the sequence is MSNNGLDIQD…KEKERPEISL (77 aa). N-acetylserine is present on Ser-2. A Phosphoserine; by PKB and autocatalysis modification is found at Ser-21. The residue at position 57 (Ser-57) is a Phosphoserine; by autocatalysis. Residues 68–77 show a composition bias toward basic and acidic residues; that stretch reads KEKERPEISL. The autoregulatory region stretch occupies residues 70-140; it reads KERPEISLPS…YNSKKTSNSQ (71 aa). The CRIB domain occupies 75–88; that stretch reads ISLPSDFEHTIHVG. Positions 75 to 105 are GTPase-binding; that stretch reads ISLPSDFEHTIHVGFDAVTGEFTGMPEQWAR. Thr-84 is subject to Phosphothreonine; by OXSR1. Phosphoserine is present on Ser-115. 2 positions are modified to phosphotyrosine: Tyr-131 and Tyr-142. Ser-144 carries the phosphoserine; by autocatalysis modification. Ser-149 is subject to Phosphoserine. The residue at position 153 (Tyr-153) is a Phosphotyrosine; by JAK2. A disordered region spans residues 159–198; the sequence is LNVKAVSETPAVPPVSEDEDDDDDDATPPPVIAPRPEHTK. At Ser-174 the chain carries Phosphoserine. The span at 174–184 shows a compositional bias: acidic residues; that stretch reads SEDEDDDDDDA. Thr-185 is modified (phosphothreonine). Phosphoserine; by autocatalysis is present on Ser-199. Phosphotyrosine; by JAK2 is present on Tyr-201. Position 204 is a phosphoserine (Ser-204). The tract at residues 211–251 is disordered; it reads VTPTRDVATSPISPTENNTTPPDALTRNTEKQKKKPKMSDE. Residues Thr-212 and Thr-219 each carry the phosphothreonine modification. 2 positions are modified to phosphoserine: Ser-220 and Ser-223. The span at 220–231 shows a compositional bias: polar residues; that stretch reads SPISPTENNTTP. Thr-225, Thr-229, and Thr-230 each carry phosphothreonine. One can recognise a Protein kinase domain in the interval 270-521; that stretch reads YTRFEKIGQG…AKELLQHQFL (252 aa). 276 to 284 provides a ligand contact to ATP; it reads IGQGASGTV. A Phosphotyrosine; by JAK2 modification is found at Tyr-285. ATP is bound by residues Lys-299 and 345-347; that span reads EYL. Asp-389 acts as the Proton acceptor in catalysis. Thr-423 is modified (phosphothreonine; by autocatalysis, BRSK2 and PDPK1).

It belongs to the protein kinase superfamily. STE Ser/Thr protein kinase family. STE20 subfamily. In terms of assembly, homodimer; homodimerization results in autoinhibition. Active as monomer. Interacts with GIT1. Component of cytoplasmic complexes, which also contains PXN, ARHGEF7 and GIT1. Interacts with NISCH. Interacts with DVL1; mediates the formation of a DVL1, MUSK and PAK1 ternary complex involved in AChR clustering. Binds to the caspase-cleaved p110 isoform of CDC2L1 and CDC2L2, p110C, but not the full-length proteins. Interacts with ARHGEF7. Interacts tightly with GTP-bound but not GDP-bound CDC42/P21 and RAC1. Interacts with SCRIB. Interacts with PDPK1. Interacts (via kinase domain) with RAF1. Interacts with NCK1 and NCK2. Interacts with TBCB. Interacts with BRSK2. Interacts with SNAI1. Interacts with CIB1 isoform 2. Interacts with CIB1 (via N-terminal region); the interaction is direct, promotes PAK1 activity and occurs in a calcium-dependent manner. Interacts with INPP5K. Interacts with gamma-tubulin. Interacts with RHOU; the interaction promotes PAK1 activation. Mg(2+) serves as cofactor. Autophosphorylated in trans, meaning that in a dimer, one kinase molecule phosphorylates the other one. Activated by autophosphorylation at Thr-423 in response to a conformation change, triggered by interaction with GTP-bound CDC42 or RAC1. Activated by phosphorylation at Thr-423 by BRSK2 and by PDPK1. Phosphorylated by JAK2 in response to PRL; this increases PAK1 kinase activity. Phosphorylated at Ser-21 by PKB/AKT; this reduces interaction with NCK1 and association with focal adhesion sites. Upon DNA damage, phosphorylated at Thr-212 and translocates to the nucleoplasm. Phosphorylated at tyrosine residues, which can be enhanced by NTN1. As to expression, overexpressed in gastric cancer cells and tissues (at protein level).

It localises to the cytoplasm. The protein resides in the cell junction. The protein localises to the focal adhesion. Its subcellular location is the cell projection. It is found in the lamellipodium. It localises to the cell membrane. The protein resides in the ruffle membrane. The protein localises to the invadopodium. Its subcellular location is the nucleus. It is found in the nucleoplasm. It localises to the chromosome. The protein resides in the cytoskeleton. The protein localises to the microtubule organizing center. Its subcellular location is the centrosome. It catalyses the reaction L-seryl-[protein] + ATP = O-phospho-L-seryl-[protein] + ADP + H(+). The catalysed reaction is L-threonyl-[protein] + ATP = O-phospho-L-threonyl-[protein] + ADP + H(+). With respect to regulation, activated by binding small G proteins. Binding of GTP-bound CDC42 or RAC1 to the autoregulatory region releases monomers from the autoinhibited dimer, and enables activation by phosphorylation of Thr-423. Phosphorylation of Thr-84 by OXSR1 inhibits activation. Functionally, protein kinase involved in intracellular signaling pathways downstream of integrins and receptor-type kinases that plays an important role in cytoskeleton dynamics, in cell adhesion, migration, proliferation, apoptosis, mitosis, and in vesicle-mediated transport processes. Can directly phosphorylate BAD and protects cells against apoptosis. Activated by interaction with CDC42 and RAC1. Functions as a GTPase effector that links the Rho-related GTPases CDC42 and RAC1 to the JNK MAP kinase pathway. Phosphorylates and activates MAP2K1, and thereby mediates activation of downstream MAP kinases. Involved in the reorganization of the actin cytoskeleton, actin stress fibers and of focal adhesion complexes. Phosphorylates the tubulin chaperone TBCB and thereby plays a role in the regulation of microtubule biogenesis and organization of the tubulin cytoskeleton. Plays a role in the regulation of insulin secretion in response to elevated glucose levels. Part of a ternary complex that contains PAK1, DVL1 and MUSK that is important for MUSK-dependent regulation of AChR clustering during the formation of the neuromuscular junction (NMJ). Activity is inhibited in cells undergoing apoptosis, potentially due to binding of CDC2L1 and CDC2L2. Phosphorylates MYL9/MLC2. Phosphorylates RAF1 at 'Ser-338' and 'Ser-339' resulting in: activation of RAF1, stimulation of RAF1 translocation to mitochondria, phosphorylation of BAD by RAF1, and RAF1 binding to BCL2. Phosphorylates SNAI1 at 'Ser-246' promoting its transcriptional repressor activity by increasing its accumulation in the nucleus. In podocytes, promotes NR3C2 nuclear localization. Required for atypical chemokine receptor ACKR2-induced phosphorylation of LIMK1 and cofilin (CFL1) and for the up-regulation of ACKR2 from endosomal compartment to cell membrane, increasing its efficiency in chemokine uptake and degradation. In synapses, seems to mediate the regulation of F-actin cluster formation performed by SHANK3, maybe through CFL1 phosphorylation and inactivation. Plays a role in RUFY3-mediated facilitating gastric cancer cells migration and invasion. In response to DNA damage, phosphorylates MORC2 which activates its ATPase activity and facilitates chromatin remodeling. In neurons, plays a crucial role in regulating GABA(A) receptor synaptic stability and hence GABAergic inhibitory synaptic transmission through its role in F-actin stabilization. In hippocampal neurons, necessary for the formation of dendritic spines and excitatory synapses; this function is dependent on kinase activity and may be exerted by the regulation of actomyosin contractility through the phosphorylation of myosin II regulatory light chain (MLC). Along with GIT1, positively regulates microtubule nucleation during interphase. Phosphorylates FXR1, promoting its localization to stress granules and activity. Phosphorylates ILK on 'Thr-173' and 'Ser-246', promoting nuclear export of ILK. The chain is Serine/threonine-protein kinase PAK 1 from Homo sapiens (Human).